The chain runs to 400 residues: Serine/threonine transporter SstT (400 aa).

Helical transmembrane passes span 11-31 (IGLV…GWLA), 45-65 (FVGA…MAAI), 81-101 (IMYM…SFLF), 138-158 (AIAE…GFAL), 175-195 (AISQ…LGLV), 213-233 (ILMV…PLII), 242-264 (YPLV…SSAA), 295-315 (MAGA…TLGI), 327-347 (LVAT…LLLI), and 354-374 (FSIP…IGVI).

This sequence belongs to the dicarboxylate/amino acid:cation symporter (DAACS) (TC 2.A.23) family.

It is found in the cell inner membrane. The catalysed reaction is L-serine(in) + Na(+)(in) = L-serine(out) + Na(+)(out). The enzyme catalyses L-threonine(in) + Na(+)(in) = L-threonine(out) + Na(+)(out). Functionally, involved in the import of serine and threonine into the cell, with the concomitant import of sodium (symport system). This is Serine/threonine transporter SstT from Psychrobacter cryohalolentis (strain ATCC BAA-1226 / DSM 17306 / VKM B-2378 / K5).